Reading from the N-terminus, the 82-residue chain is Probable tautomerase XF_1725 (82 aa).

The active-site Proton acceptor; via imino nitrogen is Pro2.

Belongs to the 4-oxalocrotonate tautomerase family.

The protein is Probable tautomerase XF_1725 of Xylella fastidiosa (strain 9a5c).